The sequence spans 91 residues: Defensin-like protein 269 (91 aa).

Residues 1 to 25 (MAVSKTTMLIVLVAIILSCVSISNA) form the signal peptide. Disulfide bonds link cysteine 41–cysteine 82, cysteine 53–cysteine 72, cysteine 59–cysteine 77, and cysteine 63–cysteine 79.

This sequence belongs to the DEFL family.

The protein localises to the secreted. In Arabidopsis thaliana (Mouse-ear cress), this protein is Defensin-like protein 269.